The sequence spans 213 residues: Thiamine-phosphate synthase (213 aa).

4-amino-2-methyl-5-(diphosphooxymethyl)pyrimidine-binding positions include 40-44 (QFREK) and asparagine 75. The Mg(2+) site is built by aspartate 76 and aspartate 95. Serine 113 is a binding site for 4-amino-2-methyl-5-(diphosphooxymethyl)pyrimidine. 139 to 141 (TPS) lines the 2-[(2R,5Z)-2-carboxy-4-methylthiazol-5(2H)-ylidene]ethyl phosphate pocket. Residue lysine 142 participates in 4-amino-2-methyl-5-(diphosphooxymethyl)pyrimidine binding. 2-[(2R,5Z)-2-carboxy-4-methylthiazol-5(2H)-ylidene]ethyl phosphate is bound by residues glycine 171 and 191-192 (IS).

Belongs to the thiamine-phosphate synthase family. It depends on Mg(2+) as a cofactor.

The catalysed reaction is 2-[(2R,5Z)-2-carboxy-4-methylthiazol-5(2H)-ylidene]ethyl phosphate + 4-amino-2-methyl-5-(diphosphooxymethyl)pyrimidine + 2 H(+) = thiamine phosphate + CO2 + diphosphate. It catalyses the reaction 2-(2-carboxy-4-methylthiazol-5-yl)ethyl phosphate + 4-amino-2-methyl-5-(diphosphooxymethyl)pyrimidine + 2 H(+) = thiamine phosphate + CO2 + diphosphate. It carries out the reaction 4-methyl-5-(2-phosphooxyethyl)-thiazole + 4-amino-2-methyl-5-(diphosphooxymethyl)pyrimidine + H(+) = thiamine phosphate + diphosphate. Its pathway is cofactor biosynthesis; thiamine diphosphate biosynthesis; thiamine phosphate from 4-amino-2-methyl-5-diphosphomethylpyrimidine and 4-methyl-5-(2-phosphoethyl)-thiazole: step 1/1. Its function is as follows. Condenses 4-methyl-5-(beta-hydroxyethyl)thiazole monophosphate (THZ-P) and 2-methyl-4-amino-5-hydroxymethyl pyrimidine pyrophosphate (HMP-PP) to form thiamine monophosphate (TMP). The chain is Thiamine-phosphate synthase from Staphylococcus aureus (strain bovine RF122 / ET3-1).